Consider the following 891-residue polypeptide: Aconitate hydratase A (891 aa).

3 residues coordinate [4Fe-4S] cluster: cysteine 435, cysteine 501, and cysteine 504.

The protein belongs to the aconitase/IPM isomerase family. As to quaternary structure, monomer. [4Fe-4S] cluster serves as cofactor.

The catalysed reaction is citrate = D-threo-isocitrate. It catalyses the reaction (2S,3R)-3-hydroxybutane-1,2,3-tricarboxylate = 2-methyl-cis-aconitate + H2O. The protein operates within carbohydrate metabolism; tricarboxylic acid cycle; isocitrate from oxaloacetate: step 2/2. It participates in organic acid metabolism; propanoate degradation. Its function is as follows. Involved in the catabolism of short chain fatty acids (SCFA) via the tricarboxylic acid (TCA)(acetyl degradation route) and the 2-methylcitrate cycle I (propionate degradation route). Catalyzes the reversible isomerization of citrate to isocitrate via cis-aconitate. Also catalyzes the hydration of 2-methyl-cis-aconitate to yield (2R,3S)-2-methylisocitrate. The (2S,3S)-2-methylcitrate (2-MC) is a very poor substrate. The apo form of AcnA functions as a RNA-binding regulatory protein. This is Aconitate hydratase A (acnA) from Salmonella typhimurium (strain LT2 / SGSC1412 / ATCC 700720).